The primary structure comprises 66 residues: Large ribosomal subunit protein uL29 (66 aa).

The protein belongs to the universal ribosomal protein uL29 family.

The protein is Large ribosomal subunit protein uL29 of Geobacillus kaustophilus (strain HTA426).